Reading from the N-terminus, the 652-residue chain is DNA ligase (652 aa).

NAD(+) contacts are provided by residues 29 to 33 (DSDYD), 78 to 79 (SL), and Glu-107. The active-site N6-AMP-lysine intermediate is Lys-109. Positions 130, 164, 278, and 302 each coordinate NAD(+). Zn(2+) contacts are provided by Cys-395, Cys-398, Cys-413, and Cys-418. Residues 577-652 (NSDAALFGLT…IEDEDWLRQL (76 aa)) enclose the BRCT domain.

It belongs to the NAD-dependent DNA ligase family. LigA subfamily. It depends on Mg(2+) as a cofactor. Mn(2+) is required as a cofactor.

The catalysed reaction is NAD(+) + (deoxyribonucleotide)n-3'-hydroxyl + 5'-phospho-(deoxyribonucleotide)m = (deoxyribonucleotide)n+m + AMP + beta-nicotinamide D-nucleotide.. In terms of biological role, DNA ligase that catalyzes the formation of phosphodiester linkages between 5'-phosphoryl and 3'-hydroxyl groups in double-stranded DNA using NAD as a coenzyme and as the energy source for the reaction. It is essential for DNA replication and repair of damaged DNA. The chain is DNA ligase from Streptococcus pyogenes serotype M49 (strain NZ131).